The chain runs to 201 residues: Imidazoleglycerol-phosphate dehydratase (201 aa).

The protein belongs to the imidazoleglycerol-phosphate dehydratase family.

The protein resides in the cytoplasm. The catalysed reaction is D-erythro-1-(imidazol-4-yl)glycerol 3-phosphate = 3-(imidazol-4-yl)-2-oxopropyl phosphate + H2O. It functions in the pathway amino-acid biosynthesis; L-histidine biosynthesis; L-histidine from 5-phospho-alpha-D-ribose 1-diphosphate: step 6/9. In Prochlorococcus marinus subsp. pastoris (strain CCMP1986 / NIES-2087 / MED4), this protein is Imidazoleglycerol-phosphate dehydratase.